Consider the following 402-residue polypeptide: Putative F-box protein At1g70970 (402 aa).

The 49-residue stretch at 4 to 52 (SSSETLHVEDLQTEIMSWLPLKSLLRFVIVSKKWASIIRGEQFKALYLR) folds into the F-box domain.

The sequence is that of Putative F-box protein At1g70970 from Arabidopsis thaliana (Mouse-ear cress).